Here is a 345-residue protein sequence, read N- to C-terminus: Anthranilate phosphoribosyltransferase (345 aa).

Residues glycine 84, glycine 87–aspartate 88, threonine 92, asparagine 94–threonine 97, lysine 112–serine 120, and serine 124 contribute to the 5-phospho-alpha-D-ribose 1-diphosphate site. Glycine 84 contacts anthranilate. Position 96 (serine 96) interacts with Mg(2+). Anthranilate is bound at residue arginine 170. Mg(2+)-binding residues include aspartate 229 and glutamate 230.

Belongs to the anthranilate phosphoribosyltransferase family. In terms of assembly, homodimer. Requires Mg(2+) as cofactor.

The enzyme catalyses N-(5-phospho-beta-D-ribosyl)anthranilate + diphosphate = 5-phospho-alpha-D-ribose 1-diphosphate + anthranilate. The protein operates within amino-acid biosynthesis; L-tryptophan biosynthesis; L-tryptophan from chorismate: step 2/5. In terms of biological role, catalyzes the transfer of the phosphoribosyl group of 5-phosphorylribose-1-pyrophosphate (PRPP) to anthranilate to yield N-(5'-phosphoribosyl)-anthranilate (PRA). This Leptothrix cholodnii (strain ATCC 51168 / LMG 8142 / SP-6) (Leptothrix discophora (strain SP-6)) protein is Anthranilate phosphoribosyltransferase.